The sequence spans 256 residues: 5'-nucleotidase SurE (256 aa).

The a divalent metal cation site is built by D9, D10, S42, and N99.

Belongs to the SurE nucleotidase family. A divalent metal cation is required as a cofactor.

Its subcellular location is the cytoplasm. The catalysed reaction is a ribonucleoside 5'-phosphate + H2O = a ribonucleoside + phosphate. In terms of biological role, nucleotidase that shows phosphatase activity on nucleoside 5'-monophosphates. The polypeptide is 5'-nucleotidase SurE (Symbiobacterium thermophilum (strain DSM 24528 / JCM 14929 / IAM 14863 / T)).